Here is a 662-residue protein sequence, read N- to C-terminus: Fusion glycoprotein F0 (662 aa).

The tract at residues 1 to 73 (MHRGIPKSSK…TRSRKQTSHR (73 aa)) is disordered. Residues 1–135 (MHRGIPKSSK…MASLFLCSKA (135 aa)) form the signal peptide. Residues 8–19 (SSKTQTHTQQDR) show a composition bias toward polar residues. A compositionally biased stretch (basic residues) spans 64-73 (TRSRKQTSHR). The Extracellular segment spans residues 136–608 (QIHWDNLSTI…VRRSSFNFGS (473 aa)). 3 N-linked (GlcNAc...) asparagine; by host glycosylation sites follow: Asn-141, Asn-173, and Asn-179. Residues 225 to 249 (FAGVVLAGVALGVATAAQITAGIAL) are fusion peptide. Residues 250–278 (HQSNLNAQAIQSLRTSLEQSNKAIEEIRE) adopt a coiled-coil conformation. Disulfide bonds link Cys-446-Cys-455, Cys-470-Cys-478, Cys-502-Cys-507, and Cys-509-Cys-532. Positions 574 to 599 (NLGNALKKLDDAKVLIDSSNQILETV) form a coiled coil. A helical transmembrane segment spans residues 609-629 (LLSVPILSCTALALLLLIYCC). Topologically, residues 630-662 (KRRYQQTLKQHTKVDPAFKPDLTGTSKSYVRSL) are cytoplasmic.

This sequence belongs to the paramyxoviruses fusion glycoprotein family. In terms of assembly, homotrimer of disulfide-linked F1-F2. Post-translationally, the inactive precursor F0 is glycosylated and proteolytically cleaved into F1 and F2 to be functionally active. The cleavage is mediated by cellular proteases during the transport and maturation of the polypeptide.

It is found in the virion membrane. Its subcellular location is the host cell membrane. Functionally, class I viral fusion protein. Under the current model, the protein has at least 3 conformational states: pre-fusion native state, pre-hairpin intermediate state, and post-fusion hairpin state. During viral and plasma cell membrane fusion, the heptad repeat (HR) regions assume a trimer-of-hairpins structure, positioning the fusion peptide in close proximity to the C-terminal region of the ectodomain. The formation of this structure appears to drive apposition and subsequent fusion of viral and plasma cell membranes. Directs fusion of viral and cellular membranes leading to delivery of the nucleocapsid into the cytoplasm. This fusion is pH independent and occurs directly at the outer cell membrane. The trimer of F1-F2 (F protein) probably interacts with H at the virion surface. Upon HN binding to its cellular receptor, the hydrophobic fusion peptide is unmasked and interacts with the cellular membrane, inducing the fusion between cell and virion membranes. Later in infection, F proteins expressed at the plasma membrane of infected cells could mediate fusion with adjacent cells to form syncytia, a cytopathic effect that could lead to tissue necrosis. The polypeptide is Fusion glycoprotein F0 (F) (Canine distemper virus (strain Onderstepoort) (CDV)).